A 311-amino-acid chain; its full sequence is tRNA pseudouridine synthase B (311 aa).

Asp49 acts as the Nucleophile in catalysis.

The protein belongs to the pseudouridine synthase TruB family. Type 1 subfamily.

It carries out the reaction uridine(55) in tRNA = pseudouridine(55) in tRNA. Its function is as follows. Responsible for synthesis of pseudouridine from uracil-55 in the psi GC loop of transfer RNAs. This Actinobacillus succinogenes (strain ATCC 55618 / DSM 22257 / CCUG 43843 / 130Z) protein is tRNA pseudouridine synthase B.